Consider the following 323-residue polypeptide: Aspartate carbamoyltransferase catalytic subunit (323 aa).

Residues Arg68 and Thr69 each contribute to the carbamoyl phosphate site. An L-aspartate-binding site is contributed by Lys96. Residues Arg118, His148, and Gln151 each contribute to the carbamoyl phosphate site. The L-aspartate site is built by Arg181 and Arg236. 2 residues coordinate carbamoyl phosphate: Gly277 and Pro278.

Belongs to the aspartate/ornithine carbamoyltransferase superfamily. ATCase family. As to quaternary structure, heterododecamer (2C3:3R2) of six catalytic PyrB chains organized as two trimers (C3), and six regulatory PyrI chains organized as three dimers (R2).

It carries out the reaction carbamoyl phosphate + L-aspartate = N-carbamoyl-L-aspartate + phosphate + H(+). It functions in the pathway pyrimidine metabolism; UMP biosynthesis via de novo pathway; (S)-dihydroorotate from bicarbonate: step 2/3. In terms of biological role, catalyzes the condensation of carbamoyl phosphate and aspartate to form carbamoyl aspartate and inorganic phosphate, the committed step in the de novo pyrimidine nucleotide biosynthesis pathway. This chain is Aspartate carbamoyltransferase catalytic subunit, found in Verminephrobacter eiseniae (strain EF01-2).